The following is a 156-amino-acid chain: Beta-defensin 125 (156 aa).

A signal peptide spans 1-20 (MNILMLTFIICGLLTRVTKG). 3 disulfides stabilise this stretch: cysteine 27/cysteine 55, cysteine 35/cysteine 49, and cysteine 39/cysteine 56. Positions 68-156 (PAFPVIHLED…PPSQTALTHN (89 aa)) are excised as a propeptide. Residues 108-156 (GETMTPETNTPETTMPPSEATTPETTMPPSETATSETMPPPSQTALTHN) are disordered. Positions 109–144 (ETMTPETNTPETTMPPSEATTPETTMPPSETATSET) are enriched in low complexity.

This sequence belongs to the beta-defensin family.

Its subcellular location is the secreted. Functionally, has antibacterial activity. The polypeptide is Beta-defensin 125 (DEFB125) (Homo sapiens (Human)).